The primary structure comprises 142 residues: Large ribosomal subunit protein uL11 (142 aa).

It belongs to the universal ribosomal protein uL11 family. As to quaternary structure, part of the ribosomal stalk of the 50S ribosomal subunit. Interacts with L10 and the large rRNA to form the base of the stalk. L10 forms an elongated spine to which L12 dimers bind in a sequential fashion forming a multimeric L10(L12)X complex. One or more lysine residues are methylated.

Its function is as follows. Forms part of the ribosomal stalk which helps the ribosome interact with GTP-bound translation factors. This chain is Large ribosomal subunit protein uL11, found in Proteus vulgaris.